Reading from the N-terminus, the 261-residue chain is 5-hmdU DNA kinase (261 aa).

This sequence belongs to the thymidylate kinase family. 5-hmdU DNA kinase subfamily.

The catalysed reaction is 5-hydroxymethyl-dUMP in DNA + ATP = 5-phosphomethyl-dUMP in DNA + ADP + H(+). Its function is as follows. Phosphorylates 5-hydroxymethyluracil (5hmdU) into 5-phosphomethyl-2'-deoxyuridine (5- PmdU) on DNA as a step in the pathway leading to thymidine hypermodifications in the viral genome. As a final result of the pathway of hypermodification, 5-Nalpha-putrescinylthymidine (Nalpha-PutT) substitutes for about 50% of thymidines in the viral DNA. These modifications probably prevent degradation of viral genome by the host restriction-modification antiviral defense system. This is 5-hmdU DNA kinase from Delftia phage PhiW-14 (Deftia acidovorans bacteriophage phiW-14).